Consider the following 376-residue polypeptide: Chaperone protein DnaJ (376 aa).

The region spanning 5-70 is the J domain; it reads DYYEVLGVGR…DKKAAYDQFG (66 aa). A CR-type zinc finger spans residues 132–210; the sequence is GLTKELRIPT…CHGEGRVEKS (79 aa). 8 residues coordinate Zn(2+): Cys-145, Cys-148, Cys-162, Cys-165, Cys-184, Cys-187, Cys-198, and Cys-201. CXXCXGXG motif repeat units follow at residues 145–152, 162–169, 184–191, and 198–205; these read CDLCDGSG, CGTCHGQG, CPTCHGRG, and CGKCHGEG.

This sequence belongs to the DnaJ family. Homodimer. Zn(2+) is required as a cofactor.

It localises to the cytoplasm. Functionally, participates actively in the response to hyperosmotic and heat shock by preventing the aggregation of stress-denatured proteins and by disaggregating proteins, also in an autonomous, DnaK-independent fashion. Unfolded proteins bind initially to DnaJ; upon interaction with the DnaJ-bound protein, DnaK hydrolyzes its bound ATP, resulting in the formation of a stable complex. GrpE releases ADP from DnaK; ATP binding to DnaK triggers the release of the substrate protein, thus completing the reaction cycle. Several rounds of ATP-dependent interactions between DnaJ, DnaK and GrpE are required for fully efficient folding. Also involved, together with DnaK and GrpE, in the DNA replication of plasmids through activation of initiation proteins. This chain is Chaperone protein DnaJ, found in Shewanella frigidimarina (strain NCIMB 400).